The primary structure comprises 422 residues: Probable Na(+)/H(+) antiporter 2 (422 aa).

Helical transmembrane passes span Ile3–Ile23, Gly28–Ile48, Ile52–Gly72, Ile93–Leu113, Ile119–Phe139, Val157–Ala177, Ile183–Phe203, Tyr216–Phe236, Tyr242–Val262, Leu281–Leu301, Leu307–Ile327, Ile341–Tyr361, and Leu384–Ala404.

The protein belongs to the monovalent cation:proton antiporter 1 (CPA1) transporter (TC 2.A.36) family.

It is found in the cell membrane. In terms of biological role, this is probably a Na(+)/H(+) antiporter. In Methanocaldococcus jannaschii (strain ATCC 43067 / DSM 2661 / JAL-1 / JCM 10045 / NBRC 100440) (Methanococcus jannaschii), this protein is Probable Na(+)/H(+) antiporter 2.